Reading from the N-terminus, the 203-residue chain is Peptidyl-tRNA hydrolase (203 aa).

Tyr14 contributes to the tRNA binding site. The active-site Proton acceptor is the His19. Tyr64, Asn66, and Asn112 together coordinate tRNA.

It belongs to the PTH family. In terms of assembly, monomer.

It localises to the cytoplasm. It catalyses the reaction an N-acyl-L-alpha-aminoacyl-tRNA + H2O = an N-acyl-L-amino acid + a tRNA + H(+). Functionally, hydrolyzes ribosome-free peptidyl-tRNAs (with 1 or more amino acids incorporated), which drop off the ribosome during protein synthesis, or as a result of ribosome stalling. Its function is as follows. Catalyzes the release of premature peptidyl moieties from peptidyl-tRNA molecules trapped in stalled 50S ribosomal subunits, and thus maintains levels of free tRNAs and 50S ribosomes. This is Peptidyl-tRNA hydrolase from Methylobacterium nodulans (strain LMG 21967 / CNCM I-2342 / ORS 2060).